A 446-amino-acid chain; its full sequence is NADH oxidase (446 aa).

Residues 7-11 (GTNHA), D32, C42, V79, 109-112 (ATGS), K131, and Y158 contribute to the FAD site. Catalysis depends on H10, which acts as the Proton acceptor. The active-site Redox-active is C42. Cysteine sulfinic acid (-SO2H) is present on C42. The NAD(+) site is built by I159, D178, Y187, and G244. D282 is an FAD binding site. An NAD(+)-binding site is contributed by A298. FAD contacts are provided by L299, A300, and S301. Position 329 (G329) interacts with NAD(+). F427 is a binding site for FAD.

This sequence belongs to the class-III pyridine nucleotide-disulfide oxidoreductase family. As to quaternary structure, homodimer. Requires FAD as cofactor.

It carries out the reaction 2 NADH + O2 + 2 H(+) = 2 NAD(+) + 2 H2O. Its activity is regulated as follows. Inhibited by hydrogen peroxide, sulfhydryl reagents and quinine, but not by EDTA. Functionally, catalyzes the four-electron reduction of molecular oxygen to water. Active on beta-NADH, but not on alpha-NADH, beta-NADPH or alpha-NADPH. Under aerobic conditions, oxygen acts as the electron acceptor. Under anaerobic conditions, DCIP and MB can replace oxygen as the electron acceptor. The sequence is that of NADH oxidase from Lactococcus lactis subsp. cremoris (strain MG1363).